The chain runs to 2851 residues: Highly reducing polyketide synthase sthA (2851 aa).

A Ketosynthase family 3 (KS3) domain is found at 8-415; the sequence is NEPIVIIGSG…GTNAHAIVEG (408 aa). The segment at 304–324 is disordered; the sequence is LDPESPNDRPQYIESHGTGTP. Residues 529 to 851 form an acyl transferase (AT) domain region; it reads IFTGQGAQYA…PYHGSLVRGE (323 aa). The segment at 926–1059 is N-terminal hotdog fold; the sequence is HQLLGNVSPD…GELNILLVDD (134 aa). In terms of domain architecture, PKS/mFAS DH spans 926–1235; that stretch reads HQLLGNVSPD…FKPVGSDAKD (310 aa). Residues 949–1242 are dehydratase (DH) domain; sequence PKEMTWLEGH…AKDDRNVFYK (294 aa). His958 serves as the catalytic Proton acceptor; for dehydratase activity. The interval 1076–1235 is C-terminal hotdog fold; the sequence is MIPVQPSRLY…FKPVGSDAKD (160 aa). The active-site Proton donor; for dehydratase activity is Asp1137. The interval 1390 to 1577 is methyltransferase (MT) domain; it reads QCTLWVAGVL…GIDTMSPPEL (188 aa). The interval 2079 to 2252 is ketoreductase (KR)domain; sequence TYWLVGLSGA…RSSVVNVGAI (174 aa). The Carrier domain occupies 2360–2443; the sequence is ADITKVVQQA…DLAAESIPAE (84 aa). Ser2399 is subject to O-(pantetheine 4'-phosphoryl)serine. The interval 2447–2496 is disordered; the sequence is HVQQQQQQAGRQDASSNTSSDDETASTLPTSPESASPGTSTPVPEKDISP. The span at 2455–2488 shows a compositional bias: polar residues; that stretch reads AGRQDASSNTSSDDETASTLPTSPESASPGTSTP. Residues 2535–2767 are reductase (R) domain; sequence LTGCSGLLGH…DLVSVDTCCS (233 aa).

The cofactor is pantetheine 4'-phosphate.

It carries out the reaction 7 malonyl-CoA + acetyl-CoA + 10 AH2 + 5 S-adenosyl-L-methionine + 2 H(+) = dehydroprobetaenone I + 10 A + 5 S-adenosyl-L-homocysteine + 7 CO2 + 8 CoA + 6 H2O. Its pathway is mycotoxin biosynthesis. In terms of biological role, highly reducing polyketide synthase; part of the gene cluster that mediates the biosynthesis of the phytotoxin stemphyloxin II. The first step of the pathway is the synthesis of dehydroprobetaenone I by the polyketide synthase sthA and the enoyl reductase sthE via condensation of one acetyl-CoA starter unit with 7 malonyl-CoA units and 5 methylations. The C-terminal reductase (R) domain of sthA catalyzes the reductive release of the polyketide chain. Because sthA lacks a designated enoylreductase (ER) domain, the required activity is provided the enoyl reductase sthE. The short-chain dehydrogenase/reductase sthC then catalyzes reduction of dehydroprobetaenone I to probetaenone I. The cytochrome P450 monooxygenase sthF catalyzes successive epoxidation, oxidation (resulting from epoxide opening) and hydroxylation to install a tertiary alcohol in the decaline ring to yield betaenone C from dehydroprobetaenone I and betaenone B from probetaenone I. The FAD-linked oxidoreductase sthB is responsible for the conversion of betaenone C to betaenone A via an intramolecular aldol reaction between C-1 and C-17 to form the bridged tricyclic system in betaenone A. Finally, the cytochrome P450 monooxygenase sthD catalyzes the hydroxylation of C-15 to afford the final metabolite stemphyloxin II. In Phaeosphaeria nodorum (strain SN15 / ATCC MYA-4574 / FGSC 10173) (Glume blotch fungus), this protein is Highly reducing polyketide synthase sthA.